An 86-amino-acid polypeptide reads, in one-letter code: Small ribosomal subunit protein bS20 (86 aa).

Residues 1–27 (MANSKSAKKRATQAERRRQHNASRRSM) are compositionally biased toward basic residues. Residues 1-28 (MANSKSAKKRATQAERRRQHNASRRSMM) are disordered.

It belongs to the bacterial ribosomal protein bS20 family.

In terms of biological role, binds directly to 16S ribosomal RNA. The sequence is that of Small ribosomal subunit protein bS20 from Aliivibrio salmonicida (strain LFI1238) (Vibrio salmonicida (strain LFI1238)).